We begin with the raw amino-acid sequence, 216 residues long: Pyridoxine/pyridoxamine 5'-phosphate oxidase (216 aa).

Substrate is bound by residues 12 to 15 and lysine 70; that span reads RREY. FMN contacts are provided by residues 65–70, 80–81, arginine 86, lysine 87, and glutamine 109; these read RLVLLK and YT. Tyrosine 127, arginine 131, and serine 135 together coordinate substrate. FMN contacts are provided by residues 144–145 and tryptophan 189; that span reads QS. 195 to 197 contributes to the substrate binding site; sequence RMH. Arginine 199 contacts FMN.

It belongs to the pyridoxamine 5'-phosphate oxidase family. As to quaternary structure, homodimer. FMN is required as a cofactor.

The catalysed reaction is pyridoxamine 5'-phosphate + O2 + H2O = pyridoxal 5'-phosphate + H2O2 + NH4(+). It carries out the reaction pyridoxine 5'-phosphate + O2 = pyridoxal 5'-phosphate + H2O2. The protein operates within cofactor metabolism; pyridoxal 5'-phosphate salvage; pyridoxal 5'-phosphate from pyridoxamine 5'-phosphate: step 1/1. Its pathway is cofactor metabolism; pyridoxal 5'-phosphate salvage; pyridoxal 5'-phosphate from pyridoxine 5'-phosphate: step 1/1. In terms of biological role, catalyzes the oxidation of either pyridoxine 5'-phosphate (PNP) or pyridoxamine 5'-phosphate (PMP) into pyridoxal 5'-phosphate (PLP). This Sodalis glossinidius (strain morsitans) protein is Pyridoxine/pyridoxamine 5'-phosphate oxidase.